A 65-amino-acid polypeptide reads, in one-letter code: Alpha-toxin Bs-Tx28 (65 aa).

Positions 3 to 65 constitute an LCN-type CS-alpha/beta domain; that stretch reads RDAYIADDKN…VPIRIPGKCR (63 aa). Intrachain disulfides connect cysteine 13-cysteine 64, cysteine 17-cysteine 37, cysteine 23-cysteine 47, and cysteine 27-cysteine 49. An Arginine amide modification is found at arginine 65.

The protein belongs to the long (4 C-C) scorpion toxin superfamily. Sodium channel inhibitor family. Alpha subfamily. In terms of tissue distribution, expressed by the venom gland.

It is found in the secreted. Its function is as follows. Alpha toxins bind voltage-independently at site-3 of sodium channels (Nav) and inhibit the inactivation of the activated channels, thereby blocking neuronal transmission. This toxin inhibits the inactivation of activated TTX-sensitive sodium channels (Nav). The chain is Alpha-toxin Bs-Tx28 from Hottentotta tamulus sindicus (Scorpion).